The sequence spans 66 residues: Large ribosomal subunit protein bL33c (66 aa).

Belongs to the bacterial ribosomal protein bL33 family.

The protein localises to the plastid. It localises to the chloroplast. The sequence is that of Large ribosomal subunit protein bL33c from Fagopyrum esculentum subsp. ancestrale (Wild buckwheat).